Here is a 469-residue protein sequence, read N- to C-terminus: Adenosylhomocysteinase (469 aa).

Residues T63, D139, and E164 each coordinate substrate. Position 165–167 (165–167 (TTT)) interacts with NAD(+). 2 residues coordinate substrate: K194 and D198. NAD(+)-binding positions include N199, 228–233 (GYGDVG), E251, N300, 321–323 (IGH), and N375.

Belongs to the adenosylhomocysteinase family. The cofactor is NAD(+).

It is found in the cytoplasm. It carries out the reaction S-adenosyl-L-homocysteine + H2O = L-homocysteine + adenosine. It participates in amino-acid biosynthesis; L-homocysteine biosynthesis; L-homocysteine from S-adenosyl-L-homocysteine: step 1/1. Its function is as follows. May play a key role in the regulation of the intracellular concentration of adenosylhomocysteine. The chain is Adenosylhomocysteinase from Pseudomonas putida (strain ATCC 700007 / DSM 6899 / JCM 31910 / BCRC 17059 / LMG 24140 / F1).